The chain runs to 495 residues: Internal alternative NAD(P)H-ubiquinone oxidoreductase A1, mitochondrial (495 aa).

A mitochondrion-targeting transit peptide spans 1-41 (MPWFKNLIKISKTITNQSSSYKSITPLASPLLAQFLQFTKQ). 61–91 (RIVVLGSGWAGCRLMKDIDTNIYDVVCVSPR) serves as a coordination point for FAD. NAD(+) is bound at residue 228 to 264 (LHCVVVGGGPTGVEFSGELSDFILKDVHQRYAHVKDY). A Microbody targeting signal motif is present at residues 486–495 (LVFGRDISRI).

Belongs to the NADH dehydrogenase family. FAD serves as cofactor.

The protein localises to the mitochondrion inner membrane. The protein resides in the peroxisome. It carries out the reaction a quinone + NADH + H(+) = a quinol + NAD(+). The enzyme catalyses a ubiquinone + NADH + H(+) = a ubiquinol + NAD(+). Functionally, alternative NADH-ubiquinone oxidoreductase which catalyzes the oxidation of mitochondrial NADH does not translocate protons across the inner mitochondrial membrane. This Solanum tuberosum (Potato) protein is Internal alternative NAD(P)H-ubiquinone oxidoreductase A1, mitochondrial (NDA1).